Consider the following 197-residue polypeptide: MDALSRLVEALRCLPGVGPKSAQRMVFHLLQHQRQRGLHLASCLEQAMKHISHCQQCNNYTEQTLCTLCQNPNRDSTLLCVVESPADVSAIEQSNSFQGKYFVLMGKISPLDGLGPDDIGLPKLKELIIREKIQEVILALSPSVESQTTIHFIHQLLKDETVNISQLAHGIPSGGELEFLDGNTISSALKNRAVINV.

The segment at 54–69 (CQQCNNYTEQTLCTLC) adopts a C4-type zinc-finger fold. Residues 77 to 172 (TLLCVVESPA…NISQLAHGIP (96 aa)) form the Toprim domain.

The protein belongs to the RecR family.

May play a role in DNA repair. It seems to be involved in an RecBC-independent recombinational process of DNA repair. It may act with RecF and RecO. This is Recombination protein RecR from Legionella pneumophila (strain Paris).